Reading from the N-terminus, the 365-residue chain is UDP-N-acetylglucosamine--N-acetylmuramyl-(pentapeptide) pyrophosphoryl-undecaprenol N-acetylglucosamine transferase (365 aa).

UDP-N-acetyl-alpha-D-glucosamine contacts are provided by residues 12–14, asparagine 123, arginine 166, serine 194, and glutamine 295; that span reads TGG.

It belongs to the glycosyltransferase 28 family. MurG subfamily.

Its subcellular location is the cell inner membrane. The enzyme catalyses di-trans,octa-cis-undecaprenyl diphospho-N-acetyl-alpha-D-muramoyl-L-alanyl-D-glutamyl-meso-2,6-diaminopimeloyl-D-alanyl-D-alanine + UDP-N-acetyl-alpha-D-glucosamine = di-trans,octa-cis-undecaprenyl diphospho-[N-acetyl-alpha-D-glucosaminyl-(1-&gt;4)]-N-acetyl-alpha-D-muramoyl-L-alanyl-D-glutamyl-meso-2,6-diaminopimeloyl-D-alanyl-D-alanine + UDP + H(+). It participates in cell wall biogenesis; peptidoglycan biosynthesis. In terms of biological role, cell wall formation. Catalyzes the transfer of a GlcNAc subunit on undecaprenyl-pyrophosphoryl-MurNAc-pentapeptide (lipid intermediate I) to form undecaprenyl-pyrophosphoryl-MurNAc-(pentapeptide)GlcNAc (lipid intermediate II). This is UDP-N-acetylglucosamine--N-acetylmuramyl-(pentapeptide) pyrophosphoryl-undecaprenol N-acetylglucosamine transferase from Phenylobacterium zucineum (strain HLK1).